Here is a 200-residue protein sequence, read N- to C-terminus: ATP-dependent Clp protease proteolytic subunit (200 aa).

Ser103 acts as the Nucleophile in catalysis. Residue His128 is part of the active site.

It belongs to the peptidase S14 family. In terms of assembly, fourteen ClpP subunits assemble into 2 heptameric rings which stack back to back to give a disk-like structure with a central cavity, resembling the structure of eukaryotic proteasomes.

The protein localises to the cytoplasm. It carries out the reaction Hydrolysis of proteins to small peptides in the presence of ATP and magnesium. alpha-casein is the usual test substrate. In the absence of ATP, only oligopeptides shorter than five residues are hydrolyzed (such as succinyl-Leu-Tyr-|-NHMec, and Leu-Tyr-Leu-|-Tyr-Trp, in which cleavage of the -Tyr-|-Leu- and -Tyr-|-Trp bonds also occurs).. Cleaves peptides in various proteins in a process that requires ATP hydrolysis. Has a chymotrypsin-like activity. Plays a major role in the degradation of misfolded proteins. The chain is ATP-dependent Clp protease proteolytic subunit from Vibrio vulnificus (strain CMCP6).